Here is a 188-residue protein sequence, read N- to C-terminus: dCTP deaminase (188 aa).

Residues 111 to 116, 135 to 137, glutamine 156, tyrosine 170, and glutamine 180 each bind dCTP; these read KSTYAR and TLE. The active-site Proton donor/acceptor is glutamate 137.

Belongs to the dCTP deaminase family. As to quaternary structure, homotrimer.

The enzyme catalyses dCTP + H2O + H(+) = dUTP + NH4(+). It functions in the pathway pyrimidine metabolism; dUMP biosynthesis; dUMP from dCTP (dUTP route): step 1/2. Catalyzes the deamination of dCTP to dUTP. This is dCTP deaminase from Francisella philomiragia subsp. philomiragia (strain ATCC 25017 / CCUG 19701 / FSC 153 / O#319-036).